The primary structure comprises 245 residues: 23S rRNA (guanosine-2'-O-)-methyltransferase RlmB (245 aa).

3 residues coordinate S-adenosyl-L-methionine: Gly-197, Ile-217, and Leu-226.

This sequence belongs to the class IV-like SAM-binding methyltransferase superfamily. RNA methyltransferase TrmH family. RlmB subfamily.

The protein localises to the cytoplasm. It carries out the reaction guanosine(2251) in 23S rRNA + S-adenosyl-L-methionine = 2'-O-methylguanosine(2251) in 23S rRNA + S-adenosyl-L-homocysteine + H(+). Functionally, specifically methylates the ribose of guanosine 2251 in 23S rRNA. The chain is 23S rRNA (guanosine-2'-O-)-methyltransferase RlmB from Pasteurella multocida (strain Pm70).